The primary structure comprises 2465 residues: Highly reducing polyketide synthase milA (2465 aa).

A Ketosynthase family 3 (KS3) domain is found at 1 to 434; that stretch reads MEPIAIVGSA…GANCHVILEG (434 aa). Catalysis depends on for beta-ketoacyl synthase activity residues Cys172, His311, and His355. The tract at residues 450–476 is disordered; the sequence is KPSLSSSPSLSPTSTSPPTPRTPANSL. The span at 451-463 shows a compositional bias: low complexity; that stretch reads PSLSSSPSLSPTS. The segment at 567 to 888 is malonyl-CoA:ACP transacylase (MAT) domain; the sequence is VFTGQGAQWA…CGTLSRAVDD (322 aa). Positions 957-1096 are N-terminal hotdog fold; it reads HPLLGVRTNT…GKVQLFVGGD (140 aa). The tract at residues 957–1265 is dehydratase (DH) domain; that stretch reads HPLLGVRTNT…LTVSPVAPVT (309 aa). One can recognise a PKS/mFAS DH domain in the interval 957 to 1267; the sequence is HPLLGVRTNT…VSPVAPVTAD (311 aa). His989 acts as the Proton acceptor; for dehydratase activity in catalysis. Positions 1111–1267 are C-terminal hotdog fold; that stretch reads LNEIDVDTFY…VSPVAPVTAD (157 aa). Residue Asp1174 is the Proton donor; for dehydratase activity of the active site. The interval 1334–1367 is disordered; that stretch reads HSTNGLTNGHASTNGHGSTNGHISTNGHSTNGDV. The ketoreductase (KR)domain stretch occupies residues 2095 to 2269; sequence TYFLVGMAGS…AASVINLTGV (175 aa). The Carrier domain occupies 2384–2459; sequence DMIFRAFQTV…QVVWSVVHQI (76 aa). Ser2419 is subject to O-(pantetheine 4'-phosphoryl)serine.

Requires pantetheine 4'-phosphate as cofactor.

It catalyses the reaction 10 malonyl-CoA + acetyl-CoA + 3 AH2 + 8 NADPH + 18 H(+) = cordypyrone A + 3 A + 10 CO2 + 8 NADP(+) + 11 CoA + 8 H2O. It functions in the pathway secondary metabolite biosynthesis. Functionally, highly reducing polyketide synthase (HR-PKS); part of the gene cluster that mediates the biosynthesis of cordypyrones A and B, 2 pyrones that show modest activities against pathogenic bacteria including methicillin-resistant Staphylococcus aureus (MRSA), Mycobacterium tuberculosis and Bacillus cereus. The HR-PKS milA catalyzes the formation of cordypyrones A via condensation of one acetate with 10 malonate units. Since milA lacks an enoyl reductase domain, the 2 beta-keto processing domains DH and KR of milA collaborate with the trans-enoyl reductase milB to catalyze the different levels of reduction. The cytochrome P450 monooxygenase milC then hydroxylates the C-22 of cordypyrones A to yield cordypyrones B. The chain is Highly reducing polyketide synthase milA from Cordyceps militaris (strain CM01) (Caterpillar fungus).